The following is a 108-amino-acid chain: Insertion element IS629 uncharacterized 12 kDa protein S4062 (108 aa).

This sequence belongs to the transposase 8 family.

This Shigella flexneri protein is Insertion element IS629 uncharacterized 12 kDa protein S4062.